The following is a 314-amino-acid chain: MKQALLCMSHSPLLHHLDPPADVKASVEAAFDQARAFVHNFDPDVIVNFGPDHYNGFFYDLMPPFCIGYKAKGSGDYDSFAGELNVPEAMAEDLAQFVMDQGLDIAISRQMEVDHGAVQPMEIIYGDVASKPLIPVFVNSVARPFVKVARVRKFGEAVGAYFKNSDKKVLFIGSGGLSHDPPVPQIATADEAQRKMLTDGRNPTPQARAARQQRVIDTAVKFAADEADIMDLNPEWDRGFLDVCASGRIEDFDRYTADDMDAVAGHSSHEVRNWVAAYSALRACGEYEIAYEFYRPIKEYISGFAVTTAILRDI.

Residue H115 is the Proton donor of the active site. H179 (proton acceptor) is an active-site residue.

This sequence belongs to the LigB/MhpB extradiol dioxygenase family. As to quaternary structure, homotetramer. Fe(2+) serves as cofactor.

The catalysed reaction is 3-(2,3-dihydroxyphenyl)propanoate + O2 = (2Z,4E)-2-hydroxy-6-oxonona-2,4-dienedioate + H(+). It catalyses the reaction (2E)-3-(2,3-dihydroxyphenyl)prop-2-enoate + O2 = (2Z,4E,7E)-2-hydroxy-6-oxonona-2,4,7-trienedioate + H(+). It functions in the pathway aromatic compound metabolism; 3-phenylpropanoate degradation. Functionally, catalyzes the non-heme iron(II)-dependent oxidative cleavage of 2,3-dihydroxyphenylpropionic acid and 2,3-dihydroxicinnamic acid into 2-hydroxy-6-ketononadienedioate and 2-hydroxy-6-ketononatrienedioate, respectively. This Rhodococcus globerulus protein is 2,3-dihydroxyphenylpropionate/2,3-dihydroxicinnamic acid 1,2-dioxygenase.